Reading from the N-terminus, the 122-residue chain is UPF0102 protein Smed_3545 (122 aa).

The protein belongs to the UPF0102 family.

This Sinorhizobium medicae (strain WSM419) (Ensifer medicae) protein is UPF0102 protein Smed_3545.